We begin with the raw amino-acid sequence, 260 residues long: DNA import protein CedA (260 aa).

The next 6 membrane-spanning stretches (helical) occupy residues 13 to 33, 47 to 67, 110 to 130, 140 to 160, 169 to 189, and 220 to 240; these read LLAS…VPVY, IYVV…GELL, ALIQ…ALTF, IVYQ…SIPF, AFIG…QFLA, and IITS…GFSM.

Forms a complex composed of CedA, CedA1 and CedA2.

It is found in the cell membrane. Part of the Ced system, which is involved in DNA import. This is DNA import protein CedA from Sulfolobus acidocaldarius (strain ATCC 33909 / DSM 639 / JCM 8929 / NBRC 15157 / NCIMB 11770).